The sequence spans 640 residues: Probable inactive receptor kinase At3g08680 (640 aa).

The first 22 residues, 1–22 (MMKIIAAFLFLLVTTFVSRCLS), serve as a signal peptide directing secretion. LRR repeat units follow at residues 93 to 115 (ALRI…ILSL), 117 to 138 (FIRS…VLSH), 139 to 162 (RLVN…QNLT), 163 to 185 (QLTD…PPRL), and 186 to 206 (KYLN…VKSF). Residues 222–249 (LTPCPENTTAPSPSPTTPTEGPGTTNIG) form a disordered region. The span at 226-247 (PENTTAPSPSPTTPTEGPGTTN) shows a compositional bias: low complexity. Residues 260 to 280 (GAIVGIAVGGSVLLFIILAII) form a helical membrane-spanning segment. The interval 289-315 (DGGQDSTAVPKAKPGRSDNKAEEFGSG) is disordered. The Protein kinase domain maps to 341–614 (RASAEVLGKG…EEVVNMMEEI (274 aa)). Ser343 carries the phosphoserine modification. 347–355 (LGKGSYGTT) contacts ATP. Thr364 bears the Phosphothreonine mark. Lys369 is a binding site for ATP. Residues Thr441, Thr514, and Thr564 each carry the phosphothreonine modification. The disordered stretch occupies residues 612–640 (EEIRPSGSGPGSGNRASSPEMIRSSDSPV).

This sequence belongs to the protein kinase superfamily. Tyr protein kinase family.

Its subcellular location is the membrane. The sequence is that of Probable inactive receptor kinase At3g08680 from Arabidopsis thaliana (Mouse-ear cress).